Here is a 470-residue protein sequence, read N- to C-terminus: AAA-ATPase At5g40000 (470 aa).

Positions 1-30 are cleaved as a signal peptide; sequence MMMMGDSFGSIGSSMASLFFLWATIQQIFP. 248 to 255 contacts ATP; sequence GPPGTGKS.

Belongs to the AAA ATPase family. BCS1 subfamily. Mg(2+) is required as a cofactor.

The enzyme catalyses ATP + H2O = ADP + phosphate + H(+). The sequence is that of AAA-ATPase At5g40000 from Arabidopsis thaliana (Mouse-ear cress).